Here is an 82-residue protein sequence, read N- to C-terminus: Sec-independent protein translocase protein TatA (82 aa).

The helical transmembrane segment at 1–21 threads the bilayer; it reads MLGFGPFELILIVVIIALLFG. Positions 36-47 are enriched in basic and acidic residues; the sequence is IKEFKQEMHEPS. The tract at residues 36-82 is disordered; that stretch reads IKEFKQEMHEPSPPRPQVTDIPSQRLDPVTGAPVSTESTVPASDRRS.

It belongs to the TatA/E family. In terms of assembly, forms a complex with TatC.

It localises to the cell membrane. Its function is as follows. Part of the twin-arginine translocation (Tat) system that transports large folded proteins containing a characteristic twin-arginine motif in their signal peptide across membranes. TatA could form the protein-conducting channel of the Tat system. The chain is Sec-independent protein translocase protein TatA from Deinococcus deserti (strain DSM 17065 / CIP 109153 / LMG 22923 / VCD115).